We begin with the raw amino-acid sequence, 113 residues long: UPF0342 protein MGAS2096_Spy0691 (113 aa).

The protein belongs to the UPF0342 family.

This is UPF0342 protein MGAS2096_Spy0691 from Streptococcus pyogenes serotype M12 (strain MGAS2096).